Reading from the N-terminus, the 304-residue chain is ATP phosphoribosyltransferase (304 aa).

Belongs to the ATP phosphoribosyltransferase family. Long subfamily. The cofactor is Mg(2+).

The protein resides in the cytoplasm. It catalyses the reaction 1-(5-phospho-beta-D-ribosyl)-ATP + diphosphate = 5-phospho-alpha-D-ribose 1-diphosphate + ATP. It participates in amino-acid biosynthesis; L-histidine biosynthesis; L-histidine from 5-phospho-alpha-D-ribose 1-diphosphate: step 1/9. Its activity is regulated as follows. Feedback inhibited by histidine. Functionally, catalyzes the condensation of ATP and 5-phosphoribose 1-diphosphate to form N'-(5'-phosphoribosyl)-ATP (PR-ATP). Has a crucial role in the pathway because the rate of histidine biosynthesis seems to be controlled primarily by regulation of HisG enzymatic activity. The sequence is that of ATP phosphoribosyltransferase from Xylella fastidiosa (strain M12).